The following is a 381-amino-acid chain: Lysophosphatidylserine lipase ABHD12 (381 aa).

Residues 1-58 lie on the Cytoplasmic side of the membrane; that stretch reads MRKRNESVTVEHERAAAAPAPLDKGCSLRHSLRLPAADTGMKRPLGRRHGLWFRLRRL. The chain crosses the membrane as a helical span at residues 59 to 79; that stretch reads IIWLLGVYIAIPFLVKLCPAI. Topologically, residues 80 to 381 are extracellular; the sequence is QAKLVFLNFV…LGIPEHEHHH (302 aa). N-linked (GlcNAc...) asparagine glycosylation is present at asparagine 106. Serine 229 acts as the Nucleophile in catalysis. Active-site charge relay system residues include aspartate 316 and histidine 355.

This sequence belongs to the serine esterase family.

It localises to the endoplasmic reticulum membrane. The catalysed reaction is 1-(9Z-octadecenoyl)-sn-glycero-3-phospho-L-serine + H2O = sn-glycero-3-phospho-L-serine + (9Z)-octadecenoate + H(+). The enzyme catalyses 1-(9Z-octadecenoyl)-sn-glycero-3-phospho-(1'-sn-glycerol) + H2O = sn-glycero-3-phospho-(1'-sn-glycerol) + (9Z)-octadecenoate + H(+). It catalyses the reaction 1-(9Z-octadecenoyl)-sn-glycero-3-phospho-(1D-myo-inositol) + H2O = sn-glycero-3-phospho-1D-myo-inositol + (9Z)-octadecenoate + H(+). It carries out the reaction 1-(9Z-octadecenoyl)-sn-glycero-3-phosphoethanolamine + H2O = sn-glycero-3-phosphoethanolamine + (9Z)-octadecenoate + H(+). The catalysed reaction is 1-(9Z-octadecenoyl)-sn-glycero-3-phosphocholine + H2O = 1-(9Z-octadecenoyl)-sn-glycerol + phosphocholine + H(+). The enzyme catalyses 2-(9Z-octadecenoyl)-glycerol + H2O = glycerol + (9Z)-octadecenoate + H(+). It catalyses the reaction 1-hexadecanoyl-sn-glycero-3-phospho-L-serine + H2O = sn-glycero-3-phospho-L-serine + hexadecanoate + H(+). It carries out the reaction 2-(5Z,8Z,11Z,14Z-eicosatetraenoyl)-glycerol + H2O = glycerol + (5Z,8Z,11Z,14Z)-eicosatetraenoate + H(+). The catalysed reaction is Hydrolyzes glycerol monoesters of long-chain fatty acids.. The enzyme catalyses 1-decanoylglycerol + H2O = decanoate + glycerol + H(+). It catalyses the reaction 1-dodecanoylglycerol + H2O = dodecanoate + glycerol + H(+). It carries out the reaction 1-tetradecanoylglycerol + H2O = tetradecanoate + glycerol + H(+). The catalysed reaction is 2-hexadecanoylglycerol + H2O = glycerol + hexadecanoate + H(+). The enzyme catalyses 1-(9Z-octadecenoyl)-glycerol + H2O = glycerol + (9Z)-octadecenoate + H(+). It catalyses the reaction 2-(9Z,12Z-octadecadienoyl)-glycerol + H2O = (9Z,12Z)-octadecadienoate + glycerol + H(+). It carries out the reaction 1-(5Z,8Z,11Z,14Z-eicosatetraenoyl)-glycerol + H2O = glycerol + (5Z,8Z,11Z,14Z)-eicosatetraenoate + H(+). The catalysed reaction is 1-(9Z,12Z-octadecadienoyl)-glycerol + H2O = (9Z,12Z)-octadecadienoate + glycerol + H(+). The enzyme catalyses 1-hexadecanoylglycerol + H2O = glycerol + hexadecanoate + H(+). It catalyses the reaction 1-octadecanoylglycerol + H2O = octadecanoate + glycerol + H(+). It carries out the reaction 1-octadecanoyl-2-(9,10-epoxyoctadecanoyl)-sn-glycero-3-phospho-L-serine + H2O = 9,10-epoxyoctadecanoate + 1-octadecanoyl-sn-glycero-3-phosphoserine + H(+). The catalysed reaction is 1-octadecanoyl-2-(10-hydroxyoctadecanoyl)-sn-glycero-3-phospho-L-serine + H2O = 1-octadecanoyl-sn-glycero-3-phosphoserine + 10-hydroxyoctadecanoate + H(+). The enzyme catalyses 1-hexadecanoyl-2-(10-hydroxyoctadecanoyl)-sn-glycero-3-phospho-L-serine + H2O = 10-hydroxyoctadecanoate + 1-hexadecanoyl-sn-glycero-3-phospho-L-serine + H(+). In terms of biological role, lysophosphatidylserine (LPS) lipase that mediates the hydrolysis of lysophosphatidylserine, a class of signaling lipids that regulates immunological and neurological processes. Represents a major lysophosphatidylserine lipase in the brain, thereby playing a key role in the central nervous system. Also able to hydrolyze oxidized phosphatidylserine; oxidized phosphatidylserine is produced in response to severe inflammatory stress and constitutes a proapoptotic 'eat me' signal. Also has monoacylglycerol (MAG) lipase activity: hydrolyzes 2-arachidonoylglycerol (2-AG), thereby acting as a regulator of endocannabinoid signaling pathways. Has a strong preference for very-long-chain lipid substrates; substrate specificity is likely due to improved catalysis and not improved substrate binding. The chain is Lysophosphatidylserine lipase ABHD12 from Gallus gallus (Chicken).